A 320-amino-acid chain; its full sequence is GRAM domain-containing protein 2A (320 aa).

The segment at 33–56 is disordered; that stretch reads TEKPGKVQEPPDDGSLHWSEGSKG. The GRAM domain occupies 74–141; it reads QQYHKLFKDI…VSVQLIKKHK (68 aa). Residues 278-298 traverse the membrane as a helical segment; sequence LLKVIFVMICFLVLSSSYLAF.

Post-translationally, phosphorylated.

It localises to the endoplasmic reticulum membrane. It is found in the cell membrane. Participates in the organization ofendoplasmic reticulum-plasma membrane contact sites (EPCS) with pleiotropic functions including STIM1 recruitment and calcium homeostasis. Constitutive tether that co-localize with ESYT2/3 tethers at endoplasmic reticulum-plasma membrane contact sites in a phosphatidylinositol lipid-dependent manner. Pre-marks the subset of phosphtidylinositol 4,5-biphosphate (PI(4,5)P2)-enriched EPCS destined for the store operated calcium entry pathway (SOCE). The sequence is that of GRAM domain-containing protein 2A from Mus musculus (Mouse).